A 94-amino-acid polypeptide reads, in one-letter code: Small ubiquitin-related modifier 3 (94 aa).

A Glycyl lysine isopeptide (Lys-Gly) (interchain with G-Cter in SUMO) cross-link involves residue K11. Residues D15–G92 enclose the Ubiquitin-like domain. G92 participates in a covalent cross-link: Glycyl lysine isopeptide (Gly-Lys) (interchain with K-? in acceptor proteins). A propeptide spanning residues V93–C94 is cleaved from the precursor.

The protein belongs to the ubiquitin family. SUMO subfamily. Interacts with sae2 and ube2i. Covalently attached to a number of proteins. Post-translationally, polymeric chains can be formed through Lys-11 cross-linking. Cleavage of precursor form by a sentrin-specific protease is necessary for function.

It is found in the cytoplasm. The protein localises to the nucleus. Its subcellular location is the PML body. In terms of biological role, ubiquitin-like protein which can be covalently attached to target lysines either as a monomer or as a lysine-linked polymer. Does not seem to be involved in protein degradation and may function as an antagonist of ubiquitin in the degradation process. Plays a role in a number of cellular processes such as nuclear transport, DNA replication and repair, mitosis and signal transduction. Covalent attachment to its substrates requires prior activation by the E1 complex sae1-sae2 and linkage to the E2 enzyme ube2i. This Xenopus laevis (African clawed frog) protein is Small ubiquitin-related modifier 3 (sumo3).